A 315-amino-acid polypeptide reads, in one-letter code: Homoserine kinase (315 aa).

96–106 contributes to the ATP binding site; the sequence is PHSRGLGSSAA.

It belongs to the GHMP kinase family. Homoserine kinase subfamily.

It localises to the cytoplasm. It catalyses the reaction L-homoserine + ATP = O-phospho-L-homoserine + ADP + H(+). It participates in amino-acid biosynthesis; L-threonine biosynthesis; L-threonine from L-aspartate: step 4/5. In terms of biological role, catalyzes the ATP-dependent phosphorylation of L-homoserine to L-homoserine phosphate. This Mycobacterium leprae (strain Br4923) protein is Homoserine kinase.